The primary structure comprises 250 residues: Phosphoribosylaminoimidazole-succinocarboxamide synthase (250 aa).

It belongs to the SAICAR synthetase family.

The enzyme catalyses 5-amino-1-(5-phospho-D-ribosyl)imidazole-4-carboxylate + L-aspartate + ATP = (2S)-2-[5-amino-1-(5-phospho-beta-D-ribosyl)imidazole-4-carboxamido]succinate + ADP + phosphate + 2 H(+). The protein operates within purine metabolism; IMP biosynthesis via de novo pathway; 5-amino-1-(5-phospho-D-ribosyl)imidazole-4-carboxamide from 5-amino-1-(5-phospho-D-ribosyl)imidazole-4-carboxylate: step 1/2. This Bifidobacterium longum subsp. infantis (strain ATCC 15697 / DSM 20088 / JCM 1222 / NCTC 11817 / S12) protein is Phosphoribosylaminoimidazole-succinocarboxamide synthase.